The sequence spans 141 residues: Hemoglobin subunit alpha-A (141 aa).

The region spanning 1 to 141 (VLSGSDKTNV…VGNVLTAKYR (141 aa)) is the Globin domain. His58 lines the O2 pocket. Heme b is bound at residue His87.

This sequence belongs to the globin family. Heterotetramer of two alpha chains and two beta chains. In terms of tissue distribution, red blood cells.

Its function is as follows. Involved in oxygen transport from the lung to the various peripheral tissues. This chain is Hemoglobin subunit alpha-A (HBAA), found in Chroicocephalus ridibundus (Black-headed gull).